We begin with the raw amino-acid sequence, 347 residues long: MLKFIQNNREATALLAIVCLFVFPGALDSQYLSVQTLTMVFSSAQILMLLAIGATMVMLTRNIDVSVGSTTGMCAVLLGVMLNAGYSLPVACLATLILGIVAGFFNGVLVAWLKIPAIVATLGTLGLYRGIMLLWTGGKWIEGLPAGLKQLSAPVFLGISAIGWFTLVLALLMAWLLAKTAFGRNFYATGDNLQGARQLGVRTEMVRIMAFSLNGGMAALAGIVFTSQIGFIPNQTGTGLEMKAIAACVLGGISLLGGSGTVIGAILGAYFLTQIDSVLVLLRIPAWWNDFIAGLVLLGVLVFDGRLRCALQRNLRRQKYARFISPPTPLQAEAKTHAQQNKNKEVA.

Helical transmembrane passes span 14 to 34 (LLAIVCLFVFPGALDSQYLSV), 39 to 59 (MVFSSAQILMLLAIGATMVML), 72 to 92 (GMCAVLLGVMLNAGYSLPVAC), 93 to 113 (LATLILGIVAGFFNGVLVAWL), 115 to 135 (IPAIVATLGTLGLYRGIMLLW), 155 to 175 (VFLGISAIGWFTLVLALLMAW), 213 to 233 (LNGGMAALAGIVFTSQIGFIP), 249 to 269 (VLGGISLLGGSGTVIGAILGA), and 284 to 304 (IPAWWNDFIAGLVLLGVLVFD).

It belongs to the binding-protein-dependent transport system permease family. AraH/RbsC subfamily. In terms of assembly, the complex is composed of two ATP-binding proteins (LsrA), two transmembrane proteins (LsrC and LsrD) and a solute-binding protein (LsrB).

The protein resides in the cell inner membrane. In terms of biological role, part of the ABC transporter complex LsrABCD involved in autoinducer 2 (AI-2) import. Probably responsible for the translocation of the substrate across the membrane. This is Autoinducer 2 import system permease protein LsrC (lsrC) from Salmonella choleraesuis (strain SC-B67).